We begin with the raw amino-acid sequence, 510 residues long: ATP synthase subunit alpha, mitochondrial (510 aa).

Residue 171–178 (GDRQTGKT) participates in ATP binding.

It belongs to the ATPase alpha/beta chains family. As to quaternary structure, F-type ATPases have 2 components, CF(1) - the catalytic core - and CF(0) - the membrane proton channel. CF(1) has five subunits: alpha(3), beta(3), gamma(1), delta(1), epsilon(1). CF(0) has three main subunits: a, b and c.

It is found in the mitochondrion. Its subcellular location is the mitochondrion inner membrane. In terms of biological role, mitochondrial membrane ATP synthase (F(1)F(0) ATP synthase or Complex V) produces ATP from ADP in the presence of a proton gradient across the membrane which is generated by electron transport complexes of the respiratory chain. F-type ATPases consist of two structural domains, F(1) - containing the extramembraneous catalytic core, and F(0) - containing the membrane proton channel, linked together by a central stalk and a peripheral stalk. During catalysis, ATP synthesis in the catalytic domain of F(1) is coupled via a rotary mechanism of the central stalk subunits to proton translocation. Subunits alpha and beta form the catalytic core in F(1). Rotation of the central stalk against the surrounding alpha(3)beta(3) subunits leads to hydrolysis of ATP in three separate catalytic sites on the beta subunits. Subunit alpha does not bear the catalytic high-affinity ATP-binding sites. The polypeptide is ATP synthase subunit alpha, mitochondrial (ATPA) (Helianthus annuus (Common sunflower)).